We begin with the raw amino-acid sequence, 336 residues long: uncharacterized protein (336 aa).

An ATP-grasp domain is found at 123–323; sequence KTLMRDSGVP…YSSLINGILD (201 aa).

It belongs to the D-alanine--D-alanine ligase family.

Functionally, could be involved in the biosynthesis of a cell wall component. This is an uncharacterized protein from Sinorhizobium fredii (strain NBRC 101917 / NGR234).